Consider the following 105-residue polypeptide: Large ribosomal subunit protein uL23 (105 aa).

It belongs to the universal ribosomal protein uL23 family. Part of the 50S ribosomal subunit. Contacts protein L29, and trigger factor when it is bound to the ribosome.

One of the early assembly proteins it binds 23S rRNA. One of the proteins that surrounds the polypeptide exit tunnel on the outside of the ribosome. Forms the main docking site for trigger factor binding to the ribosome. This is Large ribosomal subunit protein uL23 from Ureaplasma urealyticum serovar 10 (strain ATCC 33699 / Western).